The sequence spans 181 residues: Bradykinin-potentiating and C-type natriuretic peptides (181 aa).

The first 23 residues, 1-23 (MFVSRLAASGLLLLALLAVSLDG), serve as a signal peptide directing secretion. A propeptide spanning residues 24–30 (KPLQQWS) is cleaved from the precursor. Glutamine 31 is modified (pyrrolidone carboxylic acid). Residues 41–43 (LVV) constitute a propeptide that is removed on maturation. Pyrrolidone carboxylic acid is present on glutamine 44. 2 propeptides span residues 50 to 78 (TQLQ…AALD) and 90 to 157 (GSKA…KGLA). Positions 74–153 (EAALDTPPAG…GGGGGGARRL (80 aa)) are disordered. A compositionally biased stretch (low complexity) spans 104 to 114 (SKGASATSAAS). The segment covering 140 to 150 (AGGGGGGGGGA) has biased composition (gly residues). An intrachain disulfide couples cysteine 165 to cysteine 181.

In the N-terminal section; belongs to the bradykinin-potentiating peptide family. This sequence in the C-terminal section; belongs to the natriuretic peptide family. As to expression, venom gland.

It is found in the secreted. Its function is as follows. Bradykinin-potentiating peptide both inhibits the activity of the angiotensin-converting enzyme (ACE) and enhances the action of bradykinin by inhibiting the peptidases that inactivate it. It acts as an indirect hypotensive agent. In terms of biological role, antagonizes the vasodilatory actions of bradykinin at the B2 bradykinin receptor. Has no demonstrable hypotensive activity when injected intravenously in rats. Has a vasorelaxant activity in rat aortic strips and a diuretic potency in anesthetized rats. May act by activating natriuretic receptors (NPR1 and/or NPR2). The protein is Bradykinin-potentiating and C-type natriuretic peptides of Crotalus durissus collilineatus (Brazilian rattlesnake).